Here is a 243-residue protein sequence, read N- to C-terminus: MAEPRYRRILLKLSGEALAGKGTHSIDPNMLDYYAEEIERVHRHGVQVAVVLGGGNIWRGNQAIARGMDAAQSHYMGMLATIINALALQDALERRGIFTRAMTAIKMDEVAEPYIRRRATRHLEKGRVIILAAGTGNPYFTTDSAAALRAAEVHAEVILMAKNGVDGVYSADPRRYPDAKRFEYISYMEALSRGLTVMDSTALTFCMDNNIPIIVFDPLTPGNIERIVMGEHVGTLVSSHPSQ.

12 to 15 (KLSG) contributes to the ATP binding site. Residue Gly54 participates in UMP binding. Positions 55 and 59 each coordinate ATP. 135-142 (TGNPYFTT) contributes to the UMP binding site. Asn163, Tyr169, and Asp172 together coordinate ATP.

It belongs to the UMP kinase family. Homohexamer.

It is found in the cytoplasm. It catalyses the reaction UMP + ATP = UDP + ADP. Its pathway is pyrimidine metabolism; CTP biosynthesis via de novo pathway; UDP from UMP (UMPK route): step 1/1. Its activity is regulated as follows. Inhibited by UTP. Functionally, catalyzes the reversible phosphorylation of UMP to UDP. The polypeptide is Uridylate kinase (Roseiflexus sp. (strain RS-1)).